A 75-amino-acid polypeptide reads, in one-letter code: DNA-directed RNA polymerase subunit omega (75 aa).

Belongs to the RNA polymerase subunit omega family. As to quaternary structure, in cyanobacteria the RNAP catalytic core is composed of 2 alpha, 1 beta, 1 beta', 1 gamma and 1 omega subunit. When a sigma factor is associated with the core the holoenzyme is formed, which can initiate transcription.

The enzyme catalyses RNA(n) + a ribonucleoside 5'-triphosphate = RNA(n+1) + diphosphate. In terms of biological role, promotes RNA polymerase assembly. Latches the N- and C-terminal regions of the beta' subunit thereby facilitating its interaction with the beta and alpha subunits. The chain is DNA-directed RNA polymerase subunit omega from Synechococcus sp. (strain WH7803).